A 204-amino-acid polypeptide reads, in one-letter code: Translation initiation factor 2 subunit beta (204 aa).

Residues 146–204 (NLEEGQVLDVEIQSLSKRGDGVVKMGRYIMYVSNAKPGQSVKIKISRISGSIVFTERAE) enclose the TRAM domain.

Belongs to the eIF-2-beta/eIF-5 family. In terms of assembly, heterotrimer composed of an alpha, a beta and a gamma chain.

EIF-2 functions in the early steps of protein synthesis by forming a ternary complex with GTP and initiator tRNA. The sequence is that of Translation initiation factor 2 subunit beta from Methanoregula boonei (strain DSM 21154 / JCM 14090 / 6A8).